We begin with the raw amino-acid sequence, 35 residues long: Trypsin inhibitor 1 (35 aa).

Intrachain disulfides connect cysteine 2/cysteine 19, cysteine 9/cysteine 23, and cysteine 18/cysteine 34.

In terms of biological role, trypsin inhibitor. The protein is Trypsin inhibitor 1 of Spinacia oleracea (Spinach).